We begin with the raw amino-acid sequence, 956 residues long: MIIHFTLNGAPQELTVNPGENVQKLLFNMGMHSVRNSDDGFGFAGSDAIIFNGNIVNASLLIAAQLEKADIRTAESLGKWNELSLVQQAMVDVGVVQSGYNDPAAALIITDLLDRIAAPTREEIDDALSGLFSRDAGWQQYYQVIELAVARKNNPQATIDIAPTFRDDLEVIGKHYPKTDAAKMVQAKPCYVEDRVTADACVIKMLRSPHAHALITHLDVSKAEALPGVVHVITHLNCPDIYYTPGGQSAPEPSPLDRRMFGKKMRHVGDRVAAVVAESEEIALEALKLIEVEYEVLKPVMSIDEAMAEDAPVVHDEPVVYVAGAPDTLEDDNSHAAQRGEHMIINFPIGSRPRKNIAASIHGHIGDMDKGFADADVIIERTYNSTQAQQCPTETHICFTRMDGDRLVIHASTQVPWHLRRQVARLVDMKQHKVHVIKERVGGGFGSKQDILLEEVCAWATCVTGRPVLFRYTREEEFIANTSRHVAKVTVKLGAKKDGRLTAVKMDFRANTGPYGNHSLTVPCNGPALSLPLYPCDNVDFQVTTYYSNICPNGAYQGYGAPKGNFAITMALAELAEQLQIDQLEIIERNRVHEGQELKILGAIGEGKAPTSVPSAASCALEEILRQGREMIQWSSPKPQNGDWHIGRGVAIIMQKSGIPDIDQANCMIKLESDGTFIVHSGGADIGTGLDTVVTKLAAEVLHCPPQDVHVISGDTDHALFDKGAYASSGTCFSGNAARLAAENLREKILFHGAQMLGEPVADVQLATPGVVRGKKGEVSFGDIAHKGETGTGFGSLVGTGSYITPDFAFPYGANFAEVAVNTRTGEIRLDKFYALLDCGTPVNPELALGQIYGATLRAIGHSMSEEIIYDAEGHPLTRDLRSYGAPKIGDIPRDFRAVLVPSDDKVGPFGAKSISEIGVNGAAPAIATAIHDACGIWLREWHFTPEKILTALEKI.

Mo-molybdopterin-binding residues include Q414, F445, and A727.

This sequence belongs to the xanthine dehydrogenase family. Requires [2Fe-2S] cluster as cofactor. It depends on Mo-molybdopterin as a cofactor.

In terms of biological role, probably has no xanthine dehydrogenase activity; however deletion results in increased adenine sensitivity, suggesting that this protein contributes to the conversion of adenine to guanine nucleotides during purine salvage. This is Probable hypoxanthine oxidase XdhD (xdhD) from Escherichia coli O157:H7.